The chain runs to 509 residues: CDK5RAP3 protein homolog (509 aa).

Belongs to the CDK5RAP3 family.

The protein resides in the nucleus. It is found in the cytoplasm. Functionally, substrate adapter of E3 ligase complexes mediating ufmylation, the covalent attachment of the ubiquitin-like modifier UFM1 to substrate proteins, and which is involved in various processes, such as ribosome recycling and reticulophagy (also called ER-phagy). The protein is CDK5RAP3 protein homolog of Drosophila melanogaster (Fruit fly).